The following is a 389-amino-acid chain: Endo-chitosanase C (389 aa).

Positions 1 to 22 are cleaved as a signal peptide; the sequence is MPIKSFASRLALSLAICGTAMG. One copy of the R3-1 repeat lies at 280–313; sequence CSWPGHCAGFKNKGATCSSNDDCSDDLACQNGKC. Residues 320 to 350 form an R3-2 repeat; the sequence is ETCSWEGHCKGATCSSNDDCSDELACISGIC. An R3-3 repeat occupies 357-387; sequence ETCEWEGHCEGASCSSHDDCDGNLACKNGKC.

This sequence belongs to the glycosyl hydrolase 75 family.

It is found in the secreted. It catalyses the reaction Endohydrolysis of beta-(1-&gt;4)-linkages between D-glucosamine residues in a partly acetylated chitosan.. In terms of biological role, chitosanase catalyzing the endo-type cleavage of chitosan, the deacylated form of chitin. Chitosanase may be crucial in the degradation of the deacetylated portion of chitin in the fungal cell wall. Chitoolisaccharides produced by the hydrolysis of partially N-acetylated chitosan are known to have many biological activities, including antibacterial activity, immune-enhancing effects, and elicitor activity. This chain is Endo-chitosanase C (csnC), found in Aspergillus oryzae (strain ATCC 42149 / RIB 40) (Yellow koji mold).